We begin with the raw amino-acid sequence, 971 residues long: uncharacterized protein (971 aa).

The first 24 residues, 1-24 (MQSNLLKVLGVLAIVATLVCFIFA), serve as a signal peptide directing secretion. A disordered region spans residues 127-146 (RTRPGKSNLDDSNQMIPIPR). 6 helical membrane-spanning segments follow: residues 611–631 (IKAI…LGFA), 721–741 (LGLS…IVII), 753–773 (AFMA…FLLF), 795–815 (VVMM…LDFV), 832–852 (FIGT…INWF), and 865–885 (GVNM…YGYV). Positions 933-944 (TSRAKSRLKQRN) are enriched in basic residues. Residues 933-971 (TSRAKSRLKQRNRTLEHAEQNSKKYMKKIGENTNEGTLK) form a disordered region. Over residues 945-954 (RTLEHAEQNS) the composition is skewed to basic and acidic residues.

This sequence belongs to the TrbL/VirB6 family.

The protein localises to the cell membrane. This is an uncharacterized protein from Rickettsia typhi (strain ATCC VR-144 / Wilmington).